Here is a 354-residue protein sequence, read N- to C-terminus: MFDALQAWLSSFLFDWLAVLITLVLQAVAVILPVMITVAWLTYAERKVIGYMQVRMGPNRVGPGGWLQPIADAIKAMTKEVVIPAQSNKYLFIIAPILALAPAVAAWAVIPFDANGVVAADINAGVLYVLAVASIGVYGIVISGWASNSKYAFLGALRASAQKISYEIAMGFALVTVLMVADTMNLTGIVEGQQGGIWNWYWIPLLPMFFVYFISGLAETNRAPFDVAEGESEIVAGFHVEYSGMAFAVFFLAEYAMMILISFMTAIMFLGGWYSPFEGIAGLESVFSWVPGFVWLFAKVAFLLFLFLWFRATFPRYRYDQIMRLGWKVLIPVTIVWVFVVGVMEYFKVSPWFN.

The next 8 membrane-spanning stretches (helical) occupy residues 16-36 (WLAVLITLVLQAVAVILPVMI), 90-110 (YLFIIAPILALAPAVAAWAVI), 126-146 (VLYVLAVASIGVYGIVISGWA), 170-190 (MGFALVTVLMVADTMNLTGIV), 197-217 (IWNWYWIPLLPMFFVYFISGL), 249-269 (VFFLAEYAMMILISFMTAIMF), 290-310 (VPGFVWLFAKVAFLLFLFLWF), and 329-349 (VLIPVTIVWVFVVGVMEYFKV).

It belongs to the complex I subunit 1 family. In terms of assembly, NDH-1 is composed of 14 different subunits. Subunits NuoA, H, J, K, L, M, N constitute the membrane sector of the complex.

It localises to the cell inner membrane. It catalyses the reaction a quinone + NADH + 5 H(+)(in) = a quinol + NAD(+) + 4 H(+)(out). Its function is as follows. NDH-1 shuttles electrons from NADH, via FMN and iron-sulfur (Fe-S) centers, to quinones in the respiratory chain. The immediate electron acceptor for the enzyme in this species is believed to be ubiquinone. Couples the redox reaction to proton translocation (for every two electrons transferred, four hydrogen ions are translocated across the cytoplasmic membrane), and thus conserves the redox energy in a proton gradient. This subunit may bind ubiquinone. This chain is NADH-quinone oxidoreductase subunit H, found in Hydrogenovibrio crunogenus (strain DSM 25203 / XCL-2) (Thiomicrospira crunogena).